Here is a 185-residue protein sequence, read N- to C-terminus: Ribosome-recycling factor (185 aa).

This sequence belongs to the RRF family.

The protein localises to the cytoplasm. Responsible for the release of ribosomes from messenger RNA at the termination of protein biosynthesis. May increase the efficiency of translation by recycling ribosomes from one round of translation to another. The sequence is that of Ribosome-recycling factor from Zymomonas mobilis subsp. mobilis (strain ATCC 31821 / ZM4 / CP4).